The following is a 334-amino-acid chain: GTPase Obg (334 aa).

An Obg domain is found at 1-159 (MKFVDSASVR…REIGLELSVM (159 aa)). One can recognise an OBG-type G domain in the interval 160–332 (ADIGLLGIPN…LVAGLFKLVL (173 aa)). GTP-binding positions include 166–173 (GIPNAGKS), 191–195 (FTTLH), 212–215 (DIPG), 282–285 (NKID), and 313–315 (SAL). Residues serine 173 and threonine 193 each contribute to the Mg(2+) site.

The protein belongs to the TRAFAC class OBG-HflX-like GTPase superfamily. OBG GTPase family. As to quaternary structure, monomer. It depends on Mg(2+) as a cofactor.

The protein localises to the cytoplasm. An essential GTPase which binds GTP, GDP and possibly (p)ppGpp with moderate affinity, with high nucleotide exchange rates and a fairly low GTP hydrolysis rate. Plays a role in control of the cell cycle, stress response, ribosome biogenesis and in those bacteria that undergo differentiation, in morphogenesis control. The sequence is that of GTPase Obg from Vesicomyosocius okutanii subsp. Calyptogena okutanii (strain HA).